A 363-amino-acid polypeptide reads, in one-letter code: Peroxidase (363 aa).

Positions Met-1–Pro-20 are cleaved as a signal peptide. Gln-21 carries the pyrrolidone carboxylic acid modification. 4 cysteine pairs are disulfide-bonded: Cys-31/Cys-43, Cys-42/Cys-312, Cys-62/Cys-148, and Cys-276/Cys-341. The active-site Proton acceptor is the His-75. Residues Asp-76, Gly-94, Asp-96, and Ser-98 each coordinate Ca(2+). Residue Asn-162 is glycosylated (N-linked (GlcNAc...) (high mannose) asparagine). His-203 provides a ligand contact to heme b. 5 residues coordinate Ca(2+): Ser-204, Asp-221, Thr-223, Val-226, and Asp-228. A glycan (O-linked (Man...) serine) is linked at Ser-358.

It belongs to the peroxidase family. Ligninase subfamily. It depends on Ca(2+) as a cofactor. The cofactor is heme b.

It localises to the secreted. The catalysed reaction is 2 a phenolic donor + H2O2 = 2 a phenolic radical donor + 2 H2O. In Coprinopsis cinerea (strain Okayama-7 / 130 / ATCC MYA-4618 / FGSC 9003) (Inky cap fungus), this protein is Peroxidase (CIP1).